The following is a 401-amino-acid chain: Exodeoxyribonuclease 7 large subunit (401 aa).

The protein belongs to the XseA family. In terms of assembly, heterooligomer composed of large and small subunits.

It is found in the cytoplasm. The catalysed reaction is Exonucleolytic cleavage in either 5'- to 3'- or 3'- to 5'-direction to yield nucleoside 5'-phosphates.. In terms of biological role, bidirectionally degrades single-stranded DNA into large acid-insoluble oligonucleotides, which are then degraded further into small acid-soluble oligonucleotides. The protein is Exodeoxyribonuclease 7 large subunit of Syntrophotalea carbinolica (strain DSM 2380 / NBRC 103641 / GraBd1) (Pelobacter carbinolicus).